We begin with the raw amino-acid sequence, 394 residues long: L-lactate 2-monooxygenase (394 aa).

In terms of domain architecture, FMN hydroxy acid dehydrogenase spans 19–394 (VAPTLPMSYA…LTIDALRPTR (376 aa)). Y45 is an a 2-oxocarboxylate binding site. FMN contacts are provided by residues 98–100 (PIG), S129, and Q151. Residue Y153 participates in a 2-oxocarboxylate binding. T179 contacts FMN. R188 serves as a coordination point for a 2-oxocarboxylate. K267 provides a ligand contact to FMN. Catalysis depends on H291, which acts as the Proton acceptor. R294 contacts a 2-oxocarboxylate. FMN-binding positions include 321–325 (DSGIR) and R345.

This sequence belongs to the FMN-dependent alpha-hydroxy acid dehydrogenase family. In terms of assembly, homotetramer. FMN is required as a cofactor.

It catalyses the reaction (S)-lactate + O2 = acetate + CO2 + H2O. Functionally, catalyzes the oxidative decarboxylation of (S)-lactate (L-lactate) to acetate and carbon dioxide. Its physiological role remains unknown. The protein is L-lactate 2-monooxygenase of Mycolicibacterium smegmatis (Mycobacterium smegmatis).